The chain runs to 185 residues: MIDEIQLEAEEHMTASVEHTREQLLTIRTGRANPAMFNGLVAEYYGVPTPITQMATISVPEPRMLLIKPYEQSVMNEIENAIRNSDLGVNPTNDGQVLRVTIPQLTEERRRDMVKMAKSKGEDGKIAIRNIRRRAMEQLKKLQKDGDAGEDEVIAAEKEMEKITSGYIEQVDKLVANKEEELMEV.

This sequence belongs to the RRF family.

Its subcellular location is the cytoplasm. Its function is as follows. Responsible for the release of ribosomes from messenger RNA at the termination of protein biosynthesis. May increase the efficiency of translation by recycling ribosomes from one round of translation to another. The polypeptide is Ribosome-recycling factor (Corynebacterium aurimucosum (strain ATCC 700975 / DSM 44827 / CIP 107346 / CN-1) (Corynebacterium nigricans)).